Consider the following 311-residue polypeptide: HPr kinase/phosphorylase (311 aa).

Residues H138 and K159 contribute to the active site. Residue 153–160 participates in ATP binding; that stretch reads GDSGIGKS. Residue S160 coordinates Mg(2+). The Proton acceptor; for phosphorylation activity. Proton donor; for dephosphorylation activity role is filled by D177. Residues 201-210 form an important for the catalytic mechanism of both phosphorylation and dephosphorylation region; it reads LEIRGVGIID. Residue E202 coordinates Mg(2+). The active site involves R243. Positions 264 to 269 are important for the catalytic mechanism of dephosphorylation; it reads PVKTGR.

This sequence belongs to the HPrK/P family. As to quaternary structure, homohexamer. Mg(2+) serves as cofactor.

It catalyses the reaction [HPr protein]-L-serine + ATP = [HPr protein]-O-phospho-L-serine + ADP + H(+). The enzyme catalyses [HPr protein]-O-phospho-L-serine + phosphate + H(+) = [HPr protein]-L-serine + diphosphate. Functionally, catalyzes the ATP- as well as the pyrophosphate-dependent phosphorylation of a specific serine residue in HPr, a phosphocarrier protein of the phosphoenolpyruvate-dependent sugar phosphotransferase system (PTS). HprK/P also catalyzes the pyrophosphate-producing, inorganic phosphate-dependent dephosphorylation (phosphorolysis) of seryl-phosphorylated HPr (P-Ser-HPr). The two antagonistic activities of HprK/P are regulated by several intracellular metabolites, which change their concentration in response to the absence or presence of rapidly metabolisable carbon sources (glucose, fructose, etc.) in the growth medium. Therefore, by controlling the phosphorylation state of HPr, HPrK/P is a sensor enzyme that plays a major role in the regulation of carbon metabolism and sugar transport: it mediates carbon catabolite repression (CCR), and regulates PTS-catalyzed carbohydrate uptake and inducer exclusion. The chain is HPr kinase/phosphorylase from Streptococcus agalactiae serotype Ia (strain ATCC 27591 / A909 / CDC SS700).